Here is a 213-residue protein sequence, read N- to C-terminus: AN1-type zinc finger protein 5 (213 aa).

The segment at 8-42 adopts an A20-type zinc-finger fold; it reads TPGPMLCSTGCGFYGNPRTNGMCSVCYKEHLQRQQ. Positions 14, 18, 30, and 33 each coordinate Zn(2+). Residues 39–149 are disordered; the sequence is QRQQNSGRMS…EEKAPELPKP (111 aa). Residues 40 to 66 are compositionally biased toward polar residues; sequence RQQNSGRMSPMGTASGSNSPTSDSASV. Residues S48 and S58 each carry the phosphoserine modification. Positions 120 to 138 are enriched in low complexity; it reads SEPVVTQPSPSVSQPSSSQ. Positions 139–148 are enriched in basic and acidic residues; the sequence is SEEKAPELPK. The AN1-type zinc finger occupies 148-194; sequence KPKKNRCFMCRKKVGLTGFDCRCGNLFCGLHRYSDKHNCPYDYKAEA. Zn(2+)-binding residues include C154, C157, C168, C170, C175, H178, H184, and C186. Position 209 is an N6-acetyllysine (K209).

Homooligomer and/or heterooligomer. Interacts (via A20-type domain) with IKBKG and RIPK1 and with TRAF6 (via AN1-type domain). Interacts with ubiquitin and polyubiquitinated proteins. Identified in a heterotrimeric complex with ubiquitin and SQSTM1, where ZFAND5 and SQSTM1 both interact with the same ubiquitin molecule.

The protein resides in the cytoplasm. Functionally, involved in protein degradation via the ubiquitin-proteasome system. May act by anchoring ubiquitinated proteins to the proteasome. Plays a role in ubiquitin-mediated protein degradation during muscle atrophy. Plays a role in the regulation of NF-kappa-B activation and apoptosis. Inhibits NF-kappa-B activation triggered by overexpression of RIPK1 and TRAF6 but not of RELA. Also inhibits tumor necrosis factor (TNF), IL-1 and TLR4-induced NF-kappa-B activation in a dose-dependent manner. Overexpression sensitizes cells to TNF-induced apoptosis. Is a potent inhibitory factor for osteoclast differentiation. The chain is AN1-type zinc finger protein 5 (Zfand5) from Rattus norvegicus (Rat).